The following is a 510-amino-acid chain: Cytochrome P450 705A20 (510 aa).

The helical transmembrane segment at 7–27 (QHCFSFILLCFFSLLCYSLLF) threads the bilayer.

This sequence belongs to the cytochrome P450 family. Requires heme as cofactor.

The protein localises to the membrane. The chain is Cytochrome P450 705A20 (CYP705A20) from Arabidopsis thaliana (Mouse-ear cress).